Consider the following 147-residue polypeptide: Hemoglobin subunit beta-1 (147 aa).

Ser-2 bears the N-acetylserine mark. The Globin domain maps to Phe-3–His-147. Lys-18 bears the N6-succinyllysine mark. Phosphoserine is present on residues Ser-45 and Ser-51. Position 60 is an N6-succinyllysine (Lys-60). Heme b-binding residues include His-64 and His-93. Arg-105 is subject to Asymmetric dimethylarginine.

The protein belongs to the globin family. As to quaternary structure, heterotetramer of two alpha chains and two beta chains. In terms of tissue distribution, red blood cells.

Functionally, involved in oxygen transport from the lung to the various peripheral tissues. The chain is Hemoglobin subunit beta-1 (HBB1) from Panthera onca (Jaguar).